We begin with the raw amino-acid sequence, 111 residues long: Phosphoribosyl-ATP pyrophosphatase (111 aa).

Belongs to the PRA-PH family.

Its subcellular location is the cytoplasm. It carries out the reaction 1-(5-phospho-beta-D-ribosyl)-ATP + H2O = 1-(5-phospho-beta-D-ribosyl)-5'-AMP + diphosphate + H(+). It functions in the pathway amino-acid biosynthesis; L-histidine biosynthesis; L-histidine from 5-phospho-alpha-D-ribose 1-diphosphate: step 2/9. In Ectopseudomonas mendocina (strain ymp) (Pseudomonas mendocina), this protein is Phosphoribosyl-ATP pyrophosphatase.